We begin with the raw amino-acid sequence, 385 residues long: ATP phosphoribosyltransferase regulatory subunit (385 aa).

The protein belongs to the class-II aminoacyl-tRNA synthetase family. HisZ subfamily. As to quaternary structure, heteromultimer composed of HisG and HisZ subunits.

Its subcellular location is the cytoplasm. It participates in amino-acid biosynthesis; L-histidine biosynthesis; L-histidine from 5-phospho-alpha-D-ribose 1-diphosphate: step 1/9. Required for the first step of histidine biosynthesis. May allow the feedback regulation of ATP phosphoribosyltransferase activity by histidine. In Bordetella avium (strain 197N), this protein is ATP phosphoribosyltransferase regulatory subunit.